Consider the following 610-residue polypeptide: Tyrosine-protein kinase Drl (610 aa).

The signal sequence occupies residues 1 to 20 (MAPNLLTIGLLLTLIASGQA). At 21 to 242 (HLNIFLNLHE…RENLVPPASG (222 aa)) the chain is on the extracellular side. One can recognise a WIF domain in the interval 24 to 155 (IFLNLHEVLR…NLIFKRKKIC (132 aa)). Asparagine 63, asparagine 99, and asparagine 143 each carry an N-linked (GlcNAc...) asparagine glycan. The interval 202–230 (QAPEKQRPVVTESPVGRGNSGGSKRDFDP) is disordered. The helical transmembrane segment at 243–263 (LVTLIVGGILALVLVSTLILI) threads the bilayer. Over 264–610 (AYCAKGPSKR…EFHTQITRYV (347 aa)) the chain is Cytoplasmic. Residues 343 to 606 (VRLSCLVQEG…ICLSEFHTQI (264 aa)) enclose the Protein kinase domain. Residues 349-357 (VQEGNFGRI) and lysine 371 contribute to the ATP site. The active-site Proton acceptor is the aspartate 468. The residue at position 498 (tyrosine 498) is a Phosphotyrosine; by autocatalysis.

This sequence belongs to the protein kinase superfamily. Tyr protein kinase family. In the embryonic abdominal hemisegment, expression is restricted to cell body, axon and growth cone of a cluster of 20 ventral nerve cord interneurons. During muscle growth and attachment events in the embryonic abdominal hemisegment, expression is in somatic muscle fibers 21-23 at 10-13 hours and 2 patches of approximately 15 neighboring epidermal cells (dorsal and ventral attachment sites) at 6-13 hours.

Its subcellular location is the cell membrane. The catalysed reaction is L-tyrosyl-[protein] + ATP = O-phospho-L-tyrosyl-[protein] + ADP + H(+). Functionally, probable coreceptor of Wnt proteins. Involved in neuronal pathway recognition and ventral muscle attachment site selection. Non-vital for development. May be part of a signal transduction cascade involved in learning and possibly memory. This chain is Tyrosine-protein kinase Drl (drl), found in Drosophila melanogaster (Fruit fly).